Reading from the N-terminus, the 335-residue chain is Antigen-presenting glycoprotein CD1d (335 aa).

Positions 1–19 (MGCLLFLLLWALLQAWGSA) are cleaved as a signal peptide. Over 20 to 301 (EVPQRLFPLR…VLYWGGSYTS (282 aa)) the chain is Extracellular. N-linked (GlcNAc...) asparagine glycans are attached at residues N38 and N60. A D-galactosylceramide is bound at residue D98. 2 disulfides stabilise this stretch: C120-C184 and C224-C279. N126 carries an N-linked (GlcNAc...) asparagine glycan. 169–172 (DKWT) is an a D-galactosylceramide binding site. N-linked (GlcNAc...) asparagine glycosylation occurs at N181. In terms of domain architecture, Ig-like spans 185–292 (PQFVSGLLES…HSSLEGQDIV (108 aa)). Residues 302–322 (MGLIALAVLACLLFLLIVGFT) form a helical membrane-spanning segment. The Cytoplasmic portion of the chain corresponds to 323 to 335 (SRFKRQTSYQGVL). Residues 331-334 (YQGV) carry the Internalization signal motif.

Heterodimer with B2M (beta-2-microglobulin). Interacts with MHC II. Expressed on cortical thymocytes, on certain T-cell leukemias, and in various other tissues.

Its subcellular location is the cell membrane. The protein localises to the basolateral cell membrane. It localises to the endosome membrane. It is found in the lysosome membrane. The protein resides in the endoplasmic reticulum membrane. In terms of biological role, antigen-presenting protein that binds self and non-self glycolipids and presents them to T-cell receptors on natural killer T-cells. This Homo sapiens (Human) protein is Antigen-presenting glycoprotein CD1d (CD1D).